Consider the following 1050-residue polypeptide: NAD-specific glutamate dehydrogenase (1050 aa).

Residues 1–39 form a disordered region; it reads MDSPSAPVPAHKLVDRLKDQTPRHPSPQPTHVSYPKVNG. A compositionally biased stretch (basic and acidic residues) spans 12–22; the sequence is KLVDRLKDQTP. Residue K594 is part of the active site.

Belongs to the Glu/Leu/Phe/Val dehydrogenases family. Homotetramer.

It carries out the reaction L-glutamate + NAD(+) + H2O = 2-oxoglutarate + NH4(+) + NADH + H(+). This Neurospora crassa (strain ATCC 24698 / 74-OR23-1A / CBS 708.71 / DSM 1257 / FGSC 987) protein is NAD-specific glutamate dehydrogenase (gdh-1).